A 204-amino-acid polypeptide reads, in one-letter code: Tumor protein D53 (204 aa).

The segment at 1–20 (MEAQAQGLLETEPLQGTDED) is disordered. Residues 22–73 (VASADFSSMLSEEEKEELKAELVQLEDEITTLRQVLSAKERHLVEIKQKLGM) are a coiled coil. A phosphoserine mark is found at S29, S86, S122, and S131. Omega-N-methylarginine is present on R133. T146 bears the Phosphothreonine mark. A phosphoserine mark is found at S149 and S174.

Belongs to the TPD52 family. Forms a homodimer or heterodimer with other members of the family.

The polypeptide is Tumor protein D53 (TPD52L1) (Homo sapiens (Human)).